The chain runs to 118 residues: Ribonuclease P protein component (118 aa).

The protein belongs to the RnpA family. Consists of a catalytic RNA component (M1 or rnpB) and a protein subunit.

It catalyses the reaction Endonucleolytic cleavage of RNA, removing 5'-extranucleotides from tRNA precursor.. Functionally, RNaseP catalyzes the removal of the 5'-leader sequence from pre-tRNA to produce the mature 5'-terminus. It can also cleave other RNA substrates such as 4.5S RNA. The protein component plays an auxiliary but essential role in vivo by binding to the 5'-leader sequence and broadening the substrate specificity of the ribozyme. This is Ribonuclease P protein component from Enterococcus faecalis (strain ATCC 700802 / V583).